An 869-amino-acid polypeptide reads, in one-letter code: Facilitated trehalose transporter Tret1 (869 aa).

Disordered regions lie at residues 1–214 (MSGR…QKAT) and 258–315 (KESS…LIHR). The Cytoplasmic segment spans residues 1–404 (MSGRDNRGAG…VYRPTTNPIY (404 aa)). The span at 25-43 (KLKEKLTRAGDDQGYHRVE) shows a compositional bias: basic and acidic residues. Composition is skewed to low complexity over residues 44–57 (SNLS…SLDT), 79–92 (PQQQ…QQLR), and 118–127 (PFQQQQQRTP). 2 stretches are compositionally biased toward basic and acidic residues: residues 147–156 (EIREHRDRQQ) and 258–291 (KESS…KLDK). A phosphoserine mark is found at Ser260, Ser261, Ser262, Ser332, and Ser334. The interval 336 to 368 (EDFHTSRQHFQQQRSISTDSRKSRRPYEMDEMG) is disordered. Residues 343-353 (QHFQQQRSIST) show a composition bias toward polar residues. A compositionally biased stretch (basic and acidic residues) spans 354–368 (DSRKSRRPYEMDEMG). Residues 405–425 (IWTQVLAALSVSLGSLVVGFV) traverse the membrane as a helical segment. The Extracellular portion of the chain corresponds to 426–452 (SAYTSPALVSMTNRNMTSFEVTPQAAS). A glycan (N-linked (GlcNAc...) asparagine) is linked at Asn440. Residues 453 to 473 (WVGGIMPLAGLAGGIAGGPFI) form a helical membrane-spanning segment. Topologically, residues 474–485 (EYLGRRNTILAT) are cytoplasmic. The chain crosses the membrane as a helical span at residues 486–506 (AIPFIVSSLLIACAVNVAMVL). Over 507-509 (AGR) the chain is Extracellular. Residues 510–530 (FLAGFCVGIASLSLPVYLGET) form a helical membrane-spanning segment. The Cytoplasmic segment spans residues 531–536 (VQPEVR). Residues 537–557 (GTLGLLPTAFGNIGILLCFVA) form a helical membrane-spanning segment. Residues 558 to 564 (GTYMDWS) are Extracellular-facing. The helical transmembrane segment at 565-585 (MLAFLGAALPVPFLILMFLIP) threads the bilayer. Residues 586-654 (ETPRWFVSRG…NLKPLSISLG (69 aa)) are Cytoplasmic-facing. A helical transmembrane segment spans residues 655–675 (LMFFQQLSGINAVIFYTVSIF). Topologically, residues 676–685 (KDAGSTIDGN) are extracellular. Residues 686-706 (LCTIIVGIVNFMATFIATLLI) form a helical membrane-spanning segment. The Cytoplasmic segment spans residues 707–712 (DRAGRK). The helical transmembrane segment at 713–733 (ILLYVSNIAMIITLFVLGGFF) threads the bilayer. Residues 734-752 (YCKSHGQDVSQLGWLPLSC) lie on the Extracellular side of the membrane. The helical transmembrane segment at 753–773 (FVIYILGFSLGFGPIPWLMMG) threads the bilayer. The Cytoplasmic segment spans residues 774 to 779 (EILPSK). Residues 780-800 (IRGSAASVATAFNWSCTFVVT) traverse the membrane as a helical segment. Topologically, residues 801-813 (KTFQDMIDFMGAH) are extracellular. Residues 814–834 (GAFWLFGSICFIGLFFVILYV) form a helical membrane-spanning segment. Residues 835–869 (PETQGKTLEDIERKMMGRVRRMSSVANMKPLAFNM) are Cytoplasmic-facing. A phosphoserine mark is found at Ser857 and Ser858.

Belongs to the major facilitator superfamily. Sugar transporter (TC 2.A.1.1) family. Trehalose transporter subfamily.

It is found in the cell membrane. Functionally, low-capacity facilitative transporter for trehalose. Does not transport maltose, sucrose or lactose. Mediates the bidirectional transfer of trehalose. Responsible for the transport of trehalose synthesized in the fat body and the incorporation of trehalose into other tissues that require a carbon source, thereby regulating trehalose levels in the hemolymph. The chain is Facilitated trehalose transporter Tret1 from Drosophila persimilis (Fruit fly).